A 54-amino-acid chain; its full sequence is Preprotein translocase subunit SecG (54 aa).

Residues Met-1–Asp-31 are Cytoplasmic-facing. Residues Pro-32–Ala-53 traverse the membrane as a helical segment. Ile-54 is a topological domain (extracellular).

This sequence belongs to the SEC61-beta family. As to quaternary structure, component of the protein translocase complex. Heterotrimer consisting of alpha (SecY), beta (SecG) and gamma (SecE) subunits. Can form oligomers of the heterotrimer.

The protein resides in the cell membrane. Its function is as follows. Involved in protein export. The function of the beta subunit is unknown, but it may be involved in stabilization of the trimeric complex. The polypeptide is Preprotein translocase subunit SecG (Haloquadratum walsbyi (strain DSM 16790 / HBSQ001)).